Here is a 184-residue protein sequence, read N- to C-terminus: MMTEGAARRVHIIQGEYKVLSDPNAVLSTILGSCVAACLRDPVAGIGGMNHFLLPGSATSPTSGGDATRYGVHLMELLINGLLKQGARRDRLEAKIFGGAKTISTFSNVGEQNAAFAMQFLRDEGIPVVGSSTGGDHGRKLEFWPVSGRARQYPLTGAETQRTVALEQRPAAPPKPVETSIEFF.

Belongs to the CheD family.

The catalysed reaction is L-glutaminyl-[protein] + H2O = L-glutamyl-[protein] + NH4(+). In terms of biological role, probably deamidates glutamine residues to glutamate on methyl-accepting chemotaxis receptors (MCPs), playing an important role in chemotaxis. This Rhizobium leguminosarum bv. trifolii (strain WSM2304) protein is Probable chemoreceptor glutamine deamidase CheD.